The following is a 347-amino-acid chain: NADH-quinone oxidoreductase subunit H (347 aa).

8 helical membrane passes run 14–34, 82–102, 115–135, 161–181, 198–218, 258–278, 285–305, and 321–341; these read IMIGQSLLLLVCLLVFIAYIL, AVFLLAPLVAVTLALATWAVI, VGILYVFAISSLEVYGIIMGG, IGFVIVTVLLCAGSLNLTDIV, LLDWHWLSLFPMFVIFFISAL, AIVLMCALTTILFLGGWLPPL, WVPGIIWFILKATLVFFMFGI, and LGWKVFLPLSLAMVVIVAFVL.

Belongs to the complex I subunit 1 family. NDH-1 is composed of 14 different subunits. Subunits NuoA, H, J, K, L, M, N constitute the membrane sector of the complex.

The protein resides in the cell inner membrane. The catalysed reaction is a quinone + NADH + 5 H(+)(in) = a quinol + NAD(+) + 4 H(+)(out). Functionally, NDH-1 shuttles electrons from NADH, via FMN and iron-sulfur (Fe-S) centers, to quinones in the respiratory chain. The immediate electron acceptor for the enzyme in this species is believed to be ubiquinone. Couples the redox reaction to proton translocation (for every two electrons transferred, four hydrogen ions are translocated across the cytoplasmic membrane), and thus conserves the redox energy in a proton gradient. This subunit may bind ubiquinone. In Allorhizobium ampelinum (strain ATCC BAA-846 / DSM 112012 / S4) (Agrobacterium vitis (strain S4)), this protein is NADH-quinone oxidoreductase subunit H.